Reading from the N-terminus, the 310-residue chain is Probable manganese-dependent inorganic pyrophosphatase (310 aa).

Mn(2+)-binding residues include H9, D13, D15, D75, H97, and D149.

Belongs to the PPase class C family. It depends on Mn(2+) as a cofactor.

The protein resides in the cytoplasm. It carries out the reaction diphosphate + H2O = 2 phosphate + H(+). This Bacillus cytotoxicus (strain DSM 22905 / CIP 110041 / 391-98 / NVH 391-98) protein is Probable manganese-dependent inorganic pyrophosphatase.